The primary structure comprises 346 residues: S-adenosylmethionine:tRNA ribosyltransferase-isomerase (346 aa).

The protein belongs to the QueA family. As to quaternary structure, monomer.

The protein resides in the cytoplasm. It catalyses the reaction 7-aminomethyl-7-carbaguanosine(34) in tRNA + S-adenosyl-L-methionine = epoxyqueuosine(34) in tRNA + adenine + L-methionine + 2 H(+). Its pathway is tRNA modification; tRNA-queuosine biosynthesis. Transfers and isomerizes the ribose moiety from AdoMet to the 7-aminomethyl group of 7-deazaguanine (preQ1-tRNA) to give epoxyqueuosine (oQ-tRNA). This Neisseria gonorrhoeae (strain ATCC 700825 / FA 1090) protein is S-adenosylmethionine:tRNA ribosyltransferase-isomerase.